Reading from the N-terminus, the 312-residue chain is Malate dehydrogenase (312 aa).

Residues 12 to 17 (GAGFTG) and Asp36 contribute to the NAD(+) site. Positions 87 and 93 each coordinate substrate. NAD(+) is bound by residues Asn100 and 123-125 (LTN). Residue Asn125 participates in substrate binding. Residue Ser149 is modified to Phosphoserine. Arg156 contacts substrate. His180 acts as the Proton acceptor in catalysis.

It belongs to the LDH/MDH superfamily. MDH type 3 family. As to quaternary structure, homotetramer.

It carries out the reaction (S)-malate + NAD(+) = oxaloacetate + NADH + H(+). Functionally, catalyzes the reversible oxidation of malate to oxaloacetate. The chain is Malate dehydrogenase from Bacillus israeli.